Consider the following 9439-residue polypeptide: MSGTLHNTVGSGILPYQQEIRIKLTSNEPIKDSEWSITGYPNTLTLQNAVGRTNNATEKNLALVGHIDPGNYFITVKFGDKVEQFEIRSKPTPPRIITTANELRGNSNHKPEIRVTDIPNDTTAKIKLVMGGTDGDHDPEINPYTVPENYTVVAEAYHDNDPSKNGVLTFRSSDYLKDLPLSGELKAIVYYNQYVQSNFSNSVPFSSDTTPPTINEPAGLVHKYYRGDHVEITLPVTDNTGGSGLRDVNVNLPQGWTKTFTINPNNNTEGTLKLIGNIPSNEAYNTTYHFNITATDNSGNTTNPAKTFILNVGKLADDLNPVGLSRDQLQLVTDPSSLSNSEREEVKRKISEANANIRSYLLQNNPILAGVNGDVTFYYRDGSVDVIDAENVITYEPERKSIFSENGNTNKKEAVITIARGQNYTIGPNLRKYFSLSNGSDLPNRDFTSISAIGSLPSSSEISRLNVGNYNYRVNAKNAYHKTQQELNLKLKIVEVNAPTGNNRVYRVSTYNLTNDEINKIKQAFKAANSGLNLNDNDITVSNNFDHRNVSSVTVTIRKGDLIKEFSSNLNNMNFLRWVNIRDDYTISWTSSKIQGRNTDGGLEWSPDHKSLIYKYDATLGRQINTNDVLTLLQATAKNSNLRSNINSNEKQLAERGSNGYSKSIIRDDGEKSYLLNSNPIQVLDLVEPDNGYGGRQVSHSNVIYNEKNSSIVNGQVPEANGASAFNIDKVVKANAANNGIMGVIYKAQLYLAPYSPKGYIEKLGQNLSNTNNVINVYFVPSDKVNPSITVGNYDHHTVYSGETFKNTINVNDNYGLNTVASTSDSAITMTRNNNELVGQAPNVTNSTNKIVKVKATDKSGNESIVSFTVNIKPLNEKYRITTSSSNQTPVRISNIQNNANLSIEDQNRVKSSLSMTKILGTRNYVNESNNDVRSQVVSKVNRSGNNATVNVTTTFSDGTTNTITVPVKHVLLEVVPTTRTTVRGQQFPTGKGTSPNDFFSLRTGGPVDARIVWVNNQGPDINSNQIGRDLTLHAEIFFDGETTPIRKDTTYKLSQSIPKQIYETTINGRFNSSGDAYPGNFVQAVNQYWPEHMDFRWAQGSGTPSSRNAGSFTKTVTVVYQNGQTENVNVLFKVKPNKPVIDSNSVISKGQLNGQQILVRNVPQNAQVTLYQSNGTVIPNTNTTIDSNGIATVTIQGTLPTGNITAKTSMTNNVTYTKQNSSGIASNTTEDISVFSENSDQVNVTAGMQAKNDGIKIIKGTNYNFNDFNSFISNIPAHSTLTWNEEPNSWKNNIGTTTKTVTVTLPNHQGTRTVDIPITIYPTVTAKNPVRDQKGRNLTNGTDVYNYIIFENNNRLGGTASWKDNRQPDKNIAGVQNLIALVNYPGISTPLEVPVKVWVYNFDFTQPIYKIQVGDTFPKGTWAGYYKHLENGEGLPIDGWKFYWNQQSTGTTSDQWQSLAYTRTPFVKTGTYDVVNPSNWGVWQTSQSAKFIVTNAKPNQPTITQSKTGDVTVTPGAVRNILISGTNDYIQASADKIVINKNGNKLTTFVKNNDGRWTVETGSPDINGIGPTNNGTAISLSRLAVRPGDSIEAIATEGSGETISTSATSEIYIVKAPQPEQVATHTYDNGTFDILPDNSRNSLNPTERVEINYTEKLNGNETQKSFTITKNNNGKWTINNKPNYVEFNQDNGKVVFSANTIKPNSQITITPKAGQGNTENTNPTVIQAPAQHTLTINEIVKEQGQNVTNDDINNAVQVPNKNRVAIKQGNALPTNLAGGSTSHIPVVIYYSDGSSEEATETVRTKVNKTELINARRRLDEEISKENKTPSSIRNFDQAMNRAQSQINTAKSDADQVIGTEFATPQQVNSALSKVQAAQNKINEAKALLQNKADNSQLVRAKEQLQQSIQPAASTDGMTQDSTRNYKNKRQAAEQAIQHANSVINNGDATSQQINDAKNTVEQAQRDYVEAKSNLRADKSQLQSAYDTLNRDVLTNDKKPASVRRYNEAISNIRKELDTAKADASSTLRNTNPSVEQVRDALNKINTVQPKVNQAIALLQPKENNSELVQAKKRLQDAVNDIPQTQGMTQQTINNYNDKQREAERALTSAQRVIDNGDATTQEITSEKSKVEQAMQALTNAKSNLRADKNELQTAYNKLIENVSTNGKKPASIRQYETAKARIQNQINDAKNEAERILGNDNPQVSQVTQALNKIKAIQPKLTEAINMLQNKENNTELVNAKNRLENAVNDTDPTHGMTQETINNYNAKKREAQNEIQKANMIINNGDATAQDISSEKSKVEQVLQALQNAKNDLRADKRELQTAYNKLIQNVNTNGKKPSSIQNYKSARRNIENQYNTAKNEAHNVLENTNPTVNAVEDALRKINAIQPEVTKAINILQDKEDNSELVRAKEKLDQAINSQPSLNGMTQESINNYTTKRREAQNIASSADTIINNGDASIEQITENKIRVEEATNALNEAKQHLTADTTSLKTEVRKLSRRGDTNNKKPSSVSAYNNTIHSLQSEITQTENRANTIINKPIRSVEEVNNALHEVNQLNQRLTDTINLLQPLANKESLKEARNRLESKINETVQTDGMTQQSVENYKQAKIKAQNESSIAQTLINNGDASDQEVSTEIEKLNQKLSELTNSINHLTVNKEPLETAKNQLQANIDQKPSTDGMTQQSVQSYERKLQEAKDKINSINNVLANNPDVNAIRTNKVETEQINNELTQAKQGLTVDKQPLINAKTALQQSLDNQPSTTGMTEATIQNYNAKRQKAEQVIQNANKIIENAQPSVQQVSDEKSKVEQALSELNNAKSALRADKQELQQAYNQLIQPTDLNNKKPASITAYNQRYQQFSNELNSTKTNTDRILKEQNPSVADVNNALNKVREVQQKLNEARALLQNKEDNSALVRAKEQLQQAVDQVPSTEGMTQQTKDDYNSKQQAAQQEISKAQQVIDNGDATTQQISNAKTNVERALEALNNAKTGLRADKEELQNAYNQLTQNIDTSGKTPASIRKYNEAKSRIQTQIDSAKNEANSILTNDNPQVSQVTAALNKIKAVQPELDKAIAMLKNKENNNALVQAKQQLQQIVNEVDPTQGMTTDTANNYKSKKREAEDEIQKAQQIINNGDATEQQITNETNRVNQAINAINKAKNDLRADKSQLENAYNQLIQNVDTNGKKPASIQQYQAARQAIETQYNNAKSEAHQILENSNPSVNEVAQALQKVEAVQLKVNDAIHILQNKENNSALVTAKNQLQQSVNDQPLTTGMTQDSINNYEAKRNEAQSAIRNAEAVINNGDATAKQISDEKSKVEQALAHLNDAKQQLTADTTELQTAVQQLNRRGDTNNKKPRSINAYNKAIQSLETQITSAKDNANAVIQKPIRTVQEVNNALQQVNQLNQQLTEAINQLQPLSNNDALKAARLNLENKINQTVQTDGMTQQSIEAYQNAKRVAQNESNTALALINNGDADEQQITTETDRVNQQTTNLTQAINGLTVNKEPLETAKTALQNNIDQVPSTDGMTQQSVANYNQKLQIAKNEINTINNVLANNPDVNAIKTNKAEAERISNDLTQAKNNLQVDTQPLEKIKRQLQDEIDQGTNTDGMTQDSVDNYNDSLSAAIIEKGKVNKLLKRNPTVEQVKESVANAQQVIQDLQNARTSLVPDKTQLQEAKNRLENSINQQTDTDGMTQDSLNNYNDKLAKARQNLEKISKVLGGQPTVAEIRQNTDEANAHKQALDTARSQLTLNREPYINHINNESHLNNAQKDNFKAQVNSAPNHNTLETIKNKADTLNQSMTALSESIADYENQKQQENYLDASNNKRQDYDNAVNAAKGILNQTQSPTMSADVIDQKAEDVKRTKTALDGNQRLEVAKQQALNHLNTLNDLNDAQRQTLTDTINHSPNINSVNQAKEKANTVNTAMTQLKQTIANYDDELHDGNYINADKDKKDAYNNAVNNAKQLINQSDANQAQLDPAEINKVTQRVNTTKNDLNGNDKLAEAKRDANTTIDGLTYLNEAQRNKAKENVGKASTKTNITSQLQDYNQLNIAMQALRNSVNDVNNVKANSNYINEDNGPKEAYNQAVTHAQTLINAQSNPEMSRDVVNQKTQAVNTAHQNLHGQQKLEQAQSSANTEIGNLPNLTNTQKAKEKELVNSKQTRTEVQEQLNQAKSLDSSMGTLKSLVAKQPTVQKTSVYINEDQPEQSAYNDSITMGQTIINKTADPVLDKTLVDNAISNISTKENALHGEQKLTTAKTEAINALNTLADLNTPQKEAIKTAINTAHTRTDVTAEQSKANQINSAMHTLRQNISDNESVTNESNYINAEPEKQHAFTEALNNAKEIVNEQQATLDANSINQKAQAILTTKNALDGEEQLRRAKENADQEINTLNQLTDAQRNSEKGLVNSSQTRTEVASQLAKAKELNKVMEQLNHLINGKNQMINSSKFINEDANQQQAYSNAIASAEALKNKSQNPELDKVTIEQAINNINSAINNLNGEAKLTKAKEDAVASINNLSGLTNEQKPKENQAVNGAQTRDQVANKLRDAEALDQSMQTLRDLVNNQNAIHSTSNYFNEDSTQKNTYDNAIDNGSTYITGQHNPELNKSTIDQTISRINTAKNDLHGVEKLQRDKGTANQEIGQLGYLNDPQKSGEESLVNGSNTRSEVEEHLNEAKSLNNAMKQLRDKVAEKTNVKQSSDYINDSTEHQRGYDQALQEAENIINEIGNPTLNKSEIEQKLQQLTDAQNALQGSHLLEEAKNNAITGINKLTALNDAQRQKAIENVQAQQTIPAVNQQLTLDREINTAMQALRDKVGQQNNVHQQSNYFNEDEQPKHNYDNSVQAGQTIIDKLQDPIMNKNEIEQAINQINTTQTALSGENKLHTDQESTNRQIEGLSSLNTAQINAEKDLVNQAKTRTDVAQKLAAAKEINSAMSNLRDGIQNKEDIKRSSAYINADPTKVTAYDQALQNAENIINATPNVELNKATIEQALSRVQQAQQDLDGVQQLANAKQQATQTVNGLNSLNDGQKRELNLLINSANTRTKVQEELNKATELNHAMEALRNSVQNVDQVKQSSNYVNEDQPEQHNYDNAVNEAQATINNNAQPVLDKLAIERLTQTVNTTKDALHGAQKLTQDQQAAETGIRGLTSLNEPQKNAEVAKVTAATTRDEVRNIRQEATTLDTAMLGLRKSIKDKNDTKNSSKYINEDHDQQQAYDNAVNNAQQVIDETQATLSSDTINQLANAVTQAKSNLHGDTKLQHDKDSAKQTIAQLQNLNSAQKHMEDSLIDNESTRTQVQHDLTEAQALDGLMGALKESIKDYTNIVSNGNYINAEPSKKQAYDAAVQNAQNIINGTNQPTINKGNVTTATQTVKNTKDALDGDHRLEEAKNNANQTIRNLSNLNNAQKDAEKNLVNSASTLEQVQQNLQTAQQLDNAMGELRQSIAKKDQVKADSKYLNEDPQIKQNYDDAVQRVETIINETQNPELLKANIDQATQSVQNAEQALHGAEKLNQDKQTSSTELDGLTDLTDAQREKLREQINTSNSRDDIKQKIEQAKALNDAMKKLKEQVAQKDGVHANSDYTNEDSAQKDAYNNALKQAEDIINNSSNPNLNAQDITNALNNIKQAQDNLHGAQKLQQDKNTTNQAIGNLNHLNQPQKDALIQAINGATSRDQVAEKLKEAEALDEAMKQLEDQVNQDDQISNSSPFINEDSDKQKTYNDKIQAAKEIINQTSNPTLDKQKIADTLQNIKDAVNNLHGDQKLAQSKQDANNQLNHLDDLTEEQKNHFKPLINNADTRDEVNKQLEIAKQLNGDMSTLHKVINDKDQIQHLSNYINADNDKKQNYDNAIKEAEDLIHNHPDTLDHKALQDLLNKIDQAHNELNGESRFKQALDNALNDIDSLNSLNVPQRQTVKDNINHVTTLESLAQELQKAKELNDAMKAMRDSIMNQEQIRKNSNYTNEDLAQQNAYNHAVDKINNIIGEDNATMDPQIIKQATQDINTAINGLNGDQKLQDAKTDAKQQITNFTGLTEPQKQALENIINQQTSRANVAKQLSHAKFLNGKMEELKVAVAKASLVRQNSNYINEDVSEKEAYEQAIAKGQEIINSENNPTISSTDINRTIQEINDAEQNLHGDNKLRQAQEIAKNEIQNLDGLNSAQITKLIQDIGRTTTKPAVTQKLEEAKAINQAMQQLKQSIADKDATLNSSNYLNEDSEKKLAYDNAVSQAEQLINQLNDPTMDISNIQAITQKVIQAKDSLHGANKLAQNQADSNLIINQSTNLNDKQKQALNDLINHAQTKQQVAEIIAQANKLNNEMGTLKTLVEEQSNVHQQSKYINEDPQVQNIYNDSIQKGREILNGTTDDVLNNNKIADAIQNIHLTKNDLHGDQKLQKAQQDATNELNYLTNLNNSQRQSEHDEINSAPSRTEVSNDLNHAKALNEAMRQLENEVALENSVKKLSDFINEDEAAQNEYSNALQKAKDIINGVPSSTLDKATIEDALLELQNARESLHGEQKLQEAKNQAVAEIDNLQALNPGQVLAEKTLVNQASTKPEVQEALQKAKELNEAMKALKTEINKKEQIKADSRYVNADSGLQANYNSALNYGSQIIATTQPPELNKDVINRATQTIKTAENNLNGQSKLAEAKSDGNQSIEHLQGLTQSQKDKQHDLINQAQTKQQVDDIVNNSKQLDNSMNQLQQIVNNDNTVKQNSDFINEDSSQQDAYNHAIQAAKDLITAHPTIMDKNQIDQAIENIKQALNDLHGSNKLSEDKKEASEQLQNLNSLTNGQKDTILNHIFSAPTRSQVGEKIASAKQLNNTMKALRDSIADNNEILQSSKYFNEDSEQQNAYNQAVNKAKNIINDQPTPVMANDEIQSVLNEVKQTKDNLHGDQKLANDKTDAQATLNALNYLNQAQRGNLETKVQNSNSRPEVQKVVQLANQLNDAMKKLDDALTGNDAIKQTSNYINEDTSQQVNFDEYTDRGKNIVAEQTNPNMSPTNINTIADKITEAKNDLHGVQKLKQAQQQSINTINQMTGLNQAQKEQLNQEIQQTQTRSEVHQVINKAQALNDSMNTLRQSITDEHEVKQTSNYINETVGNQTAYNNAVDRVKQIINQTSNPTMNPLEVERATSNVKISKDALHGERELNDNKNSKTFAVNHLDNLNQAQKEALTHEIEQATIVSQVNNIYNKAKALNNDMKKLKDIVAQQDNVRQSNNYINEDSTPQNMYNDTINHAQSIIDQVANPTMSHDEIENAINNIKHAINALDGEHKLQQAKENANLLINSLNDLNAPQRDAINRLVNEAQTREKVAEQLQSAQALNDAMKHLRNSIQNQSSVRQESKYINASDAKKEQYNHAVREVENIINEQHPTLDKEIIKQLTDGVNQANNDLNGVELLDADKQNAHQSIPTLMHLNQAQQNALNEKINNAVTRTEVAAIIGQAKLLDHAMENLEESIKDKEQVKQSSNYINEDSDVQETYDNAVDHVTEILNQTVNPTLSIEDIEHAINEVNQAKKQLRGKQKLYQTIDLADKELSKLDDLTSQQSSSISNQIYTAKTRTEVAQAIEKAKSLNHAMKALNKVYKNADKVLDSSRFINEDQPEKKAYQQAINHVDSIIHRQTNPEMDPTVINSITHELETAQNNLHGDQKLAHAQQDAANVINGLIHLNVAQREVMINTNTNATTREKVAKNLDNAQALDKAMETLQQVVAHKNNILNDSKYLNEDSKYQQQYDRVIADAEQLLNQTTNPTLEPYKVDIVKDNVLANEKILFGAEKLSYDKSNANDEIKHMNYLNNAQKQSIKDMISHAALRTEVKQLLQQAKILDEAMKSLEDKTQVVITDTTLPNYTEASEDKKEKVDQTVSHAQAIIDKINGSNVSLDQVRQALEQLTQASENLDGDQRVEEAKVHANQTIDQLTHLNSLQQQTAKESVKNATKLEEIATVSNNAQALNKVMGKLEQFINHADSVENSDNYRQADDDKIIAYDEALEHGQDIQKTNATQNETKQALQQLIYAETSLNGFERLNHARPRALEYIKSLEKINNAQKSALEDKVTQSHDLLELEHIVNEGTNLNDIMGELANAIVNNYAPTKASINYINADNLRKDNFTQAINNARDALNKTQGQNLDFNAIDTFKDDIFKTKDALNGIERLTAAKSKAEKLIDSLKFINKAQFTHANDEIINTNSIAQLSRIVNQAFDLNDAMKSLRDELNNQAFPVQASSNYINSDEDLKQQFDHALSNARKVLAKENGKNLDEKQIQGLKQVIEDTKDALNGIQRLSKAKAKAIQYVQSLSYINDAQRHIAENNIHNSDDLSSLANTLSKASDLDNAMKDLRDTIESNSTSVPNSVNYINADKNLQIEFDEALQQASATSSKTSENPATIEEVLGLSQAIYDTKNALNGEQRLATEKSKDLKLIKGLKDLNKAQLEDVTNKVNSANTLTELSQLTQSTLELNDKMKLLRDKLKTLVNPVKASLNYRNADYNLKRQFNKALKEAKGVLNKNSGTNVNINDIQHLLTQIDNAKDQLNGERRLKEHQQKSEVFIIKELDILNNAQKAAIINQIRASKDIKIINQIVDNAIELNDAMQGLKEHVAQLTATTKDNIEYLNADEDHKLQYDYAINLANNVLDKENGTNKDANIIIGMIQNMDDARALLNGIERLKDAQTKAHNDIKDTLKRQLDEIEHANATSNSKAQAKQMVNEEARKALSNINDATSNDLVNQAKDEGQSAIEHIHADELPKAKLDANQMIDQKVEDINHLISQNPNLSNEEKNKLISQINKLVNGIKNEIQQAINKQQIENATTKLDEVIETTKKLIIAKAEAKQMIKELSQKKRDAINNNTDLTPSQKAHALADIDKTEKDALQHIENSNSIDDINNNKEHAFNTLAHIIIWDTDQQPLVFELPELSLQNALVTSEVVVHRDETISLESIIGAMTLTDELKVNIVSLPNTDKVADHLTAKVKVILADGSYVTVNVPVKVVEKELQIAKKDAIKTIDVLVKQKIKDIDSNNELTSTQREDAKAEIERLKKQAIDKVNHSKSIKDIETVKRTDFEEIDQFDPKRFTLNKAKKDIITDVNTQIQNGFKEIETIKGLTSNEKTQFDKQLTALQKEFLEKVEHAHNLVELNQLQQEFNNRYKHILNQAHLLGEKHIAEHKLGYVVVNKTQQILNNQSASYFIKQWALDRIKQIQLETMNSIRGAHTVQDVHKALLQGIEQILKVNVSIINQSFNDSLHNFNYLHSKFDARLREKDVANHIVQTETFKEVLKGTGVEPGKINKETQQPKLHKNDNDSLFKHLVDNFGKTVGVITLTGLLSSFWLVLAKRRKKEEEEKQSIKNHHKDIRLSDTDKIDPIVITKRKIDKEEQIQNDDKHSIPVAKHKKSKEKQLSEEDIHSIPVVKRKQNSDNKDTKQKKVTSKKKKTPQSTKKVVKTKKRSKK.

FIVAR domains lie at 1815–1871, 1901–1957, 1985–2041, 2071–2127, 2155–2211, 2241–2297, 2325–2381, 2411–2467, 2488–2551, 2581–2638, 2665–2720, 2748–2804, 2832–2888, 2918–2974, 3002–3058, 3088–3144, 3172–3228, 3258–3314, 3335–3398, 3428–3484, 3512–3567, 3595–3650, 3678–3733, 3802–3860, 3928–3983, 4056–4114, 4182–4240, 4308–4365, and 4433–4491; these read ARRR…VNSA, AKEQ…INDA, AYDT…VRDA, AKKR…ITSE, AYNK…VTQA, AKNR…ISSE, AYNK…VEDA, AKEK…ITEN, DTTS…VNNA, ARNR…STEI, AKNQ…IRTN, AKTA…VSDE, AYNQ…VNNA, AKEQ…ISNA, AYNQ…VTAA, AKQQ…ITNE, AYNQ…VAQA, AKNQ…ISDE, DTTE…VNNA, ARLN…ITTE, AKTA…IKTN, IKRQ…VKES, AKNR…IRQN, SMTA…IDQK, AMTQ…LDPA, AMQA…VNQK, SMGT…VDNA, AMHT…INQK, and VMEQ…IEQA. Basic and acidic residues predominate over residues 2495-2507; sequence EVRKLSRRGDTNN. Positions 2495-2514 are disordered; the sequence is EVRKLSRRGDTNNKKPSSVS. Positions 2925 to 2938 are enriched in polar residues; sequence AVDQVPSTEGMTQQ. Residues 2925 to 2951 form a disordered region; sequence AVDQVPSTEGMTQQTKDDYNSKQQAAQ. A disordered region spans residues 4522-4542; sequence LSGLTNEQKPKENQAVNGAQT. An FIVAR 30 domain is found at 4559-4617; the sequence is SMQTLRDLVNNQNAIHSTSNYFNEDSTQKNTYDNAIDNGSTYITGQHNPELNKSTIDQT. The disordered stretch occupies residues 4648 to 4671; that stretch reads LGYLNDPQKSGEESLVNGSNTRSE. FIVAR domains follow at residues 4685 to 4743, 4811 to 4869, 4937 to 4995, 5063 to 5115, 5189 to 5246, 5314 to 5372, 5440 to 5498, 5566 to 5624, 5692 to 5750, 5818 to 5875, 5943 to 6000, 6068 to 6126, 6194 to 6252, and 6320 to 6378; these read AMKQ…IEQK, AMQA…IEQA, AMSN…IEQA, AMEA…VLDK, AMLG…INQL, LMGA…VTTA, AMGE…IDQA, AMKK…ITNA, AMKQ…IADT, DMST…LQDL, AMKA…IKQA, KMEE…INRT, AMQQ…IQAI, and EMGT…IADA. Residues 5699–5712 are compositionally biased toward polar residues; that stretch reads QVNQDDQISNSSPF. The tract at residues 5699–5719 is disordered; that stretch reads QVNQDDQISNSSPFINEDSDK. Residues 6413–6434 are disordered; that stretch reads NNSQRQSEHDEINSAPSRTEVS. FIVAR domains follow at residues 6446-6504, 6572-6630, 6698-6755, 6823-6877, 6949-7007, 7075-7133, 7201-7259, 7327-7384, 7452-7510, 7578-7636, 7704-7762, 7830-7888, 7956-8010, 8078-8137, 8205-8264, 8332-8391, 8459-8518, and 8587-8643; these read AMRQ…IEDA, AMKA…INRA, SMNQ…IDQA, TMKA…ANDE, AMKK…INTI, SMNT…VERA, DMKK…IENA, AMKH…IKQL, AMEN…IEHA, AMKA…INSI, AMET…VDIV, AMKS…VRQA, VMGK…TKQA, IMGE…IDTF, AMKS…IQGL, AMKD…VLGL, KMKL…IQHL, and AMQG…ANII. Residues 9306–9324 form a helical membrane-spanning segment; sequence TVGVITLTGLLSSFWLVLA. 3 stretches are compositionally biased toward basic and acidic residues: residues 9363-9375, 9386-9395, and 9404-9413; these read DKEE…DKHS, EKQLSEEDIH, and QNSDNKDTKQ. A disordered region spans residues 9363-9439; the sequence is DKEEQIQNDD…VVKTKKRSKK (77 aa). Over residues 9414–9439 the composition is skewed to basic residues; sequence KKVTSKKKKTPQSTKKVVKTKKRSKK.

The protein localises to the cell membrane. This Staphylococcus epidermidis (strain ATCC 35984 / DSM 28319 / BCRC 17069 / CCUG 31568 / BM 3577 / RP62A) protein is Extracellular matrix-binding protein ebh (ebh).